A 61-amino-acid chain; its full sequence is Probable tautomerase BA_5626/GBAA_5626/BAS5226 (61 aa).

Residue proline 2 is the Proton acceptor; via imino nitrogen of the active site.

Belongs to the 4-oxalocrotonate tautomerase family.

In Bacillus anthracis, this protein is Probable tautomerase BA_5626/GBAA_5626/BAS5226.